A 153-amino-acid polypeptide reads, in one-letter code: UPF0178 protein MXAN_5526 (153 aa).

Belongs to the UPF0178 family.

This is UPF0178 protein MXAN_5526 from Myxococcus xanthus (strain DK1622).